The primary structure comprises 201 residues: uncharacterized protein (201 aa).

The N-terminal stretch at Met1 to Ala28 is a signal peptide.

This sequence belongs to the fimbrial protein family.

The protein resides in the fimbrium. Its function is as follows. Part of the yadCKLM-htrE-yadVN fimbrial operon. Could contribute to adhesion to various surfaces in specific environmental niches. This is an uncharacterized protein from Escherichia coli (strain K12).